Reading from the N-terminus, the 587-residue chain is Arginine--tRNA ligase (587 aa).

Residues 127–137 (ANPTGPLHVGH) carry the 'HIGH' region motif.

It belongs to the class-I aminoacyl-tRNA synthetase family. In terms of assembly, monomer.

The protein localises to the cytoplasm. It catalyses the reaction tRNA(Arg) + L-arginine + ATP = L-arginyl-tRNA(Arg) + AMP + diphosphate. The sequence is that of Arginine--tRNA ligase from Dechloromonas aromatica (strain RCB).